We begin with the raw amino-acid sequence, 359 residues long: MSDDFNDRRRRPAAFSVEAEEAIEREMEQTPRRAPGSFSEKVVMTPDAEDPFIGTTAAVESLNLPEAMPRRRRLSFGKIAAGAFGILISLAVGLWIDRLVRDLFSRADWLGYGAVAVVAIGVIAFLIVVAREVFGMMQLTAVQTLKADLAAAAASGKTQAARAATARLVHLLAGNPRTAKGRARLAETEGDIIDAPHLIELTERELLAPLDREARRIILGAAKRVSIVTAVSPRALVDLGYVIYESARMIRAMAELYGGRPGTLGLLRLMRDVIAHLAVTGSIAVGDSLIQQILGHGLASKLSARLGEGVINGLMTARIGIAAMDLCRPMPFRALKRPSIGDFLGDLAPGTARSEGSAG.

2 consecutive transmembrane segments (helical) span residues 76–96 (FGKI…GLWI) and 109–129 (WLGY…LIVV).

This sequence belongs to the UPF0283 family.

Its subcellular location is the cell inner membrane. This Rhizobium meliloti (strain 1021) (Ensifer meliloti) protein is UPF0283 membrane protein R01807.